We begin with the raw amino-acid sequence, 80 residues long: Serine protease inhibitor Kazal-type 6 (80 aa).

Positions 1-23 (MKTSGVFLLLSLALFCFFSGVFG) are cleaved as a signal peptide. Glutamine 24 is subject to Pyrrolidone carboxylic acid. One can recognise a Kazal-like domain in the interval 24–80 (QGAQVDCAEFKDPKVYCTRESNPHCGSDGQTYGNKCAFCKAVMKSGGKINLKHRGKC). 3 disulfides stabilise this stretch: cysteine 30-cysteine 62, cysteine 40-cysteine 59, and cysteine 48-cysteine 80.

As to expression, seminal plasma.

The protein resides in the secreted. Serine protease inhibitor selective for kallikreins. Efficiently inhibits KLK4, KLK5, KLK6, KLK7, KLK12, KLK13 and KLK14. Doesn't inhibit KLK8. Inhibits acrosin, trypsin, and chymotrypsin. In Bos taurus (Bovine), this protein is Serine protease inhibitor Kazal-type 6 (SPINK6).